Reading from the N-terminus, the 176-residue chain is Transcription factor E (176 aa).

Residues 8-90 (NDPVIQKYLH…LWTFHYENIP (83 aa)) enclose the HTH TFE/IIEalpha-type domain.

This sequence belongs to the TFE family. As to quaternary structure, monomer. Interaction with RNA polymerase subunits RpoF and RpoE is necessary for Tfe stimulatory transcription activity. Able to interact with Tbp and RNA polymerase in the absence of DNA promoter. Interacts both with the preinitiation and elongation complexes.

In terms of biological role, transcription factor that plays a role in the activation of archaeal genes transcribed by RNA polymerase. Facilitates transcription initiation by enhancing TATA-box recognition by TATA-box-binding protein (Tbp), and transcription factor B (Tfb) and RNA polymerase recruitment. Not absolutely required for transcription in vitro, but particularly important in cases where Tbp or Tfb function is not optimal. It dynamically alters the nucleic acid-binding properties of RNA polymerases by stabilizing the initiation complex and destabilizing elongation complexes. Seems to translocate with the RNA polymerase following initiation and acts by binding to the non template strand of the transcription bubble in elongation complexes. The protein is Transcription factor E of Haloquadratum walsbyi (strain DSM 16790 / HBSQ001).